Here is a 413-residue protein sequence, read N- to C-terminus: L-methionine gamma-lyase (413 aa).

Residues 75 to 77 and 105 to 106 each bind pyridoxal 5'-phosphate; these read YGR and GM. Tyr131 is a binding site for substrate. 218 to 220 contacts pyridoxal 5'-phosphate; that stretch reads SAT. At Lys221 the chain carries N6-(pyridoxal phosphate)lysine. A substrate-binding site is contributed by Arg365. The segment at 388–413 is disordered; sequence RLPETAGAGREPSRTALRLPERAADR.

Belongs to the trans-sulfuration enzymes family. In terms of assembly, homotetramer; dimer of active dimers. The cofactor is pyridoxal 5'-phosphate.

The enzyme catalyses L-methionine + H2O = methanethiol + 2-oxobutanoate + NH4(+). It carries out the reaction L-homocysteine + H2O = 2-oxobutanoate + hydrogen sulfide + NH4(+) + H(+). The catalysed reaction is L-cysteine + H2O = hydrogen sulfide + pyruvate + NH4(+) + H(+). Catalyzes the alpha,gamma-elimination of L-methionine to produce methanethiol, 2-oxobutanoate and ammonia. Is probably involved in L-methionine catabolism. Is also able to catalyze the alpha,gamma-elimination of L-homocysteine, and, to a lesser extent, the alpha,beta-elimination of L-cysteine. The sequence is that of L-methionine gamma-lyase from Streptomyces avermitilis (strain ATCC 31267 / DSM 46492 / JCM 5070 / NBRC 14893 / NCIMB 12804 / NRRL 8165 / MA-4680).